Here is a 497-residue protein sequence, read N- to C-terminus: Probable cytosol aminopeptidase (497 aa).

Residues K268 and D273 each coordinate Mn(2+). Residue K280 is part of the active site. D291, D350, and E352 together coordinate Mn(2+). R354 is a catalytic residue.

Belongs to the peptidase M17 family. Mn(2+) serves as cofactor.

The protein localises to the cytoplasm. The enzyme catalyses Release of an N-terminal amino acid, Xaa-|-Yaa-, in which Xaa is preferably Leu, but may be other amino acids including Pro although not Arg or Lys, and Yaa may be Pro. Amino acid amides and methyl esters are also readily hydrolyzed, but rates on arylamides are exceedingly low.. The catalysed reaction is Release of an N-terminal amino acid, preferentially leucine, but not glutamic or aspartic acids.. In terms of biological role, presumably involved in the processing and regular turnover of intracellular proteins. Catalyzes the removal of unsubstituted N-terminal amino acids from various peptides. This chain is Probable cytosol aminopeptidase, found in Alkalilimnicola ehrlichii (strain ATCC BAA-1101 / DSM 17681 / MLHE-1).